The chain runs to 600 residues: Kelch-like protein 24 (600 aa).

Residues 66–133 (TDVIICVEGK…VYTGKVKITT (68 aa)) form the BTB domain. One can recognise a BACK domain in the interval 168–270 (CLGIQRFADT…HPNYFVQTVE (103 aa)). 6 Kelch repeats span residues 314–363 (VIVV…ALRN), 365–407 (ILVS…VLLG), 408–454 (KVYV…SCVG), 456–502 (LFVI…SLNN), 504–544 (IYVA…VCNG), and 546–592 (IYIL…TIHR).

In terms of assembly, forms homodimers. Interacts with GRIK2. Component of the BCR(KLHL24) E3 ubiquitin ligase complex, composed of CUL3, RBX1 and KLHL24. Interacts with CUL3. Interacts with KRT14. In terms of processing, autoubiquitinated. Autoubiquitination leads to proteasomal degradation and is necessary to control KLHL24 levels. In terms of tissue distribution, expressed in the skin. Found in keratinocytes, dermal fibroblasts, and melanocytes. Basal-layer keratinocytes have lower KLHL24 expression than suprabasal keratinocytes. Expressed in the brain, spinal cord, liver, testis, heart and at higher levels in the skeletal muscle.

It localises to the perikaryon. Its subcellular location is the cell projection. The protein localises to the axon. It is found in the cytoplasm. The protein resides in the cell junction. It localises to the desmosome. Its subcellular location is the adherens junction. Necessary to maintain the balance between intermediate filament stability and degradation, a process that is essential for skin integrity. As part of the BCR(KLHL24) E3 ubiquitin ligase complex, mediates ubiquitination of KRT14 and controls its levels during keratinocytes differentiation. Specifically reduces kainate receptor-mediated currents in hippocampal neurons, most probably by modulating channel properties. Has a crucial role in cardiac development and function. The sequence is that of Kelch-like protein 24 (KLHL24) from Homo sapiens (Human).